The primary structure comprises 788 residues: Cap-specific mRNA (nucleoside-2'-O-)-methyltransferase 1 (788 aa).

One can recognise a G-patch domain in the interval 25-71 (YSNKAMEMMKKMGYENDKGLGKSNQGRLEPIIAVQQDGRRGFGLKLD). Substrate contacts are provided by residues 143–147 (KTVFD) and R158. In terms of domain architecture, RrmJ-type SAM-dependent 2'-O-MTase spans 171–384 (IFLNRAAVKM…ERYLVCKYKR (214 aa)). N174 contributes to the S-adenosyl-L-methionine binding site. The active site involves K179. 215-221 (CAGPGGF) provides a ligand contact to S-adenosyl-L-methionine. Residue D298 is part of the active site. 308-310 (NIQ) is a substrate binding site. The active-site Proton acceptor is K338. N373 lines the substrate pocket.

In terms of assembly, interacts (via C-terminus) with r2d2 (via C-terminus).

Its subcellular location is the nucleus. It localises to the cytoplasm. It carries out the reaction a 5'-end (N(7)-methyl 5'-triphosphoguanosine)-ribonucleoside in mRNA + S-adenosyl-L-methionine = a 5'-end (N(7)-methyl 5'-triphosphoguanosine)-(2'-O-methyl-ribonucleoside) in mRNA + S-adenosyl-L-homocysteine + H(+). S-adenosyl-L-methionine-dependent methyltransferase that mediates mRNA cap1 2'-O-ribose methylation to the 5'-cap structure of mRNAs. Methylates the ribose of the first nucleotide of a m(7)GpppG-capped mRNA to produce m(7)GpppNmp (cap1). Positively regulates the Ago2-dependent small RNA pathway, with roles in both siRNA biogenesis and RISC assembly. Involved in facilitating conversion of pre-RISC into holo-RISC, possibly by promoting the unwinding of Ago2-bound siRNA duplexes and thus the retention of the guide strand in holo-RISC. This is Cap-specific mRNA (nucleoside-2'-O-)-methyltransferase 1 from Drosophila melanogaster (Fruit fly).